The chain runs to 64 residues: Temporin-ALd (64 aa).

Residues 1–22 (MFTMKKSLLLLFFLGTIHLSLC) form the signal peptide. Positions 23 to 46 (EQERNAEEERRDDLGERQAEVEKR) are excised as a propeptide. At Leu62 the chain carries Leucine amide.

As to expression, expressed by the skin glands.

Its subcellular location is the secreted. Its function is as follows. Antimicrobial peptide with activity against Gram-positive and Gram-negative bacteria and against fungi. Has been tested against S.aureus (MIC=1.25 ug/mL), B.pumilus (MIC=2.5 ug/mL), B.cereus (MIC=15.0 ug/mL), E.coli (MIC=1.25 ug/mL), B.dysenteriae (MIC=5.0 ug/mL), A.cacoaceticus (MIC=15.0 ug/mL), P.aeruginosa (MIC=5.0 ug/mL) and C.albicans (MIC=1.25 ug/mL). Also shows a weak hemolytic activity. This chain is Temporin-ALd, found in Amolops loloensis (Lolokou Sucker Frog).